Here is a 207-residue protein sequence, read N- to C-terminus: Large ribosomal subunit protein uL3 (207 aa).

It belongs to the universal ribosomal protein uL3 family. In terms of assembly, part of the 50S ribosomal subunit. Forms a cluster with proteins L14 and L19.

In terms of biological role, one of the primary rRNA binding proteins, it binds directly near the 3'-end of the 23S rRNA, where it nucleates assembly of the 50S subunit. In Thermotoga maritima (strain ATCC 43589 / DSM 3109 / JCM 10099 / NBRC 100826 / MSB8), this protein is Large ribosomal subunit protein uL3.